A 976-amino-acid chain; its full sequence is Chloride channel protein 1 (976 aa).

Over 1–118 the chain is Cytoplasmic; the sequence is MQPSQSLRRG…VVRRKLGEDW (118 aa). Residues 71 to 92 form a disordered region; sequence DKEQDTGMSKKMGSSESMDSKD. The span at 77 to 87 shows a compositional bias: low complexity; the sequence is GMSKKMGSSES. The chain crosses the membrane as a helical span at residues 119–150; it reads IFLVLLGLLMALVSWSMDYVSAKSLQAYKWSY. At 151–158 the chain is on the extracellular side; that stretch reads YQMQPNLP. A helical membrane pass occupies residues 159-179; it reads LQYLVWVTFPLTLILFSAVFC. Residues 180–183 are Cytoplasmic-facing; it reads HLIS. The segment at residues 184–189 is an intramembrane region (note=Loop between two helices); it reads PQAVGS. The short motif at 188 to 192 is the Selectivity filter part_1 element; sequence GSGIP. Chloride is bound at residue S189. The segment at residues 190–195 is an intramembrane region (helical); that stretch reads GIPEMK. The Cytoplasmic portion of the chain corresponds to 196 to 208; that stretch reads TILRGVILKEYLT. The helical intramembrane region spans 209-224; sequence LKAFVAKVVALTAGLG. Positions 225 to 230 form an intramembrane region, note=Loop between two helices; that stretch reads SGIPVG. The Selectivity filter part_2 signature appears at 230-234; that stretch reads GKEGP. Positions 231–246 form an intramembrane region, helical; the sequence is KEGPFVHIASICAAVL. At 247–268 the chain is on the cytoplasmic side; that stretch reads SKFMSMFCGVYEQPYYYTDMLT. 2 intramembrane regions (helical) span residues 269–280 and 281–290; these read VGCAVGVGCCFG and TPLGGVLFSI. Over 291 to 301 the chain is Cytoplasmic; sequence EVTSTYFAVRN. The helical transmembrane segment at 302 to 321 threads the bilayer; that stretch reads YWRGFFAATFSAFVFRVLAV. Residues 322–347 lie on the Extracellular side of the membrane; sequence WNKDAVTITALFRTNFRMDFPFDLQE. Residues 348-376 form a helical membrane-spanning segment; the sequence is LPAFAIIGICCGFLGAVFVYLHRQVMLGV. The Cytoplasmic segment spans residues 377 to 390; that stretch reads RKHKALSQFLAKHR. A helical membrane pass occupies residues 391-408; the sequence is LLYPGIVTFIIASFTFPP. Topologically, residues 409 to 414 are extracellular; that stretch reads GIGQFM. An intramembrane region (note=Loop between two helices) is located at residues 415–418; the sequence is AGEL. The helical intramembrane region spans 419–426; the sequence is MPREAIST. The Extracellular segment spans residues 427 to 457; sequence LFDNNTWVKHVGDPESLGRSAVWIHPRVNVI. The segment at residues 458–475 is an intramembrane region (helical); it reads IIIFLFFIMKFWMSIVAT. An intramembrane region (note=Loop between two helices) is located at residues 476-482; it reads TMPIPCG. Residues 482-486 carry the Selectivity filter part_3 motif; the sequence is GGFMP. Residues 483–498 constitute an intramembrane region (helical); that stretch reads GFMPVFVLGAAFGRLV. F484 is a binding site for chloride. The Extracellular portion of the chain corresponds to 499–521; the sequence is GEIMAMLFPDGILFDDIIYKILP. An intramembrane region (helical) is located at residues 522-538; the sequence is GGYAVIGAAALTGAVSH. An intramembrane region (note=Loop between two helices) is located at residues 539-540; sequence TV. Positions 541–554 form an intramembrane region, helical; it reads STAVICFELTGQIA. The Extracellular segment spans residues 555 to 557; that stretch reads HIL. An intramembrane region (helical) is located at residues 558-571; the sequence is PMMVAVILANMVAQ. Positions 572 to 575 form an intramembrane region, note=Loop between two helices; that stretch reads SLQP. The helical intramembrane region spans 576–578; it reads SLY. Y578 serves as a coordination point for chloride. Residues 579–976 lie on the Cytoplasmic side of the membrane; sequence DSIIQVKKLP…DEEDEDELIL (398 aa). The 60-residue stretch at 609–668 folds into the CBS 1 domain; that stretch reads MVRDVKFVSATCTYGELRTLLQTTTVKTLPLVDSKDSMILLGSVERSELQSLLQRHLGPE. A disordered region spans residues 707 to 759; that stretch reads DEDEDEDLSGKPELPPLPPPHPLPSAPLSSEESNGPLPSHKQQPEAPEPADQR. The segment covering 719-731 has biased composition (pro residues); that stretch reads ELPPLPPPHPLPS. Positions 816-871 constitute a CBS 2 domain; the sequence is IDQSPFQLVEQTSLHKTHTLFSLLGLHLAYVTSMGKLRGVLALEELQKAIEGHTKS. Residues 872–976 form a disordered region; it reads GVQLRPPLAS…DEEDEDELIL (105 aa). A Phosphoserine modification is found at S881. Positions 914-925 are enriched in pro residues; that stretch reads SPEPPAPSPSPA. 2 stretches are compositionally biased toward acidic residues: residues 938-955 and 967-976; these read ELEELELGESPGLEEELA and DEEDEDELIL.

The protein belongs to the chloride channel (TC 2.A.49) family. ClC-1/CLCN1 subfamily. In terms of assembly, homodimer.

The protein localises to the cell membrane. Its subcellular location is the sarcolemma. It localises to the T-tubule. The enzyme catalyses chloride(in) = chloride(out). It catalyses the reaction thiocyanate(in) = thiocyanate(out). The catalysed reaction is bromide(in) = bromide(out). It carries out the reaction nitrate(in) = nitrate(out). The enzyme catalyses iodide(out) = iodide(in). Modulated by membrane voltage with depolarization favouring channel opening and hyperpolarization favouring channel closure. Inhibited by acidic pH and ATP binding due to a shift of voltage dependence of common gating to more positive voltages. Inhibited by 9-anthracene-carboxylic. Voltage-gated chloride channel involved in skeletal muscle excitability. Generates most of the plasma membrane chloride conductance in skeletal muscle fibers, stabilizes the resting membrane potential and contributes to the repolarization phase during action potential firing. Forms a homodimeric channel where each subunit has its own ion conduction pathway. Conducts double-barreled currents controlled by two types of gates, two fast glutamate gates that control each subunit independently and a slow common gate that opens and shuts off both subunits simultaneously. Has a significant open probability at muscle resting potential and is further activated upon membrane depolarization. Permeable to small monovalent anions with ion selectivity for chloride &gt; thiocyanate &gt; bromide &gt; nitrate &gt; iodide. The polypeptide is Chloride channel protein 1 (CLCN1) (Canis lupus familiaris (Dog)).